The primary structure comprises 444 residues: Probable ribonuclease FAU-1 (444 aa).

Belongs to the FAU-1 family.

In terms of biological role, probable RNase involved in rRNA stability through maturation and/or degradation of precursor rRNAs. Binds to RNA in loop regions with AU-rich sequences. The protein is Probable ribonuclease FAU-1 of Pyrobaculum arsenaticum (strain DSM 13514 / JCM 11321 / PZ6).